The primary structure comprises 185 residues: Transcriptional repressor NrdR (185 aa).

Residues 1–24 (MRCPFCGGPDTQVKDSRPSEDSSA) are disordered. Residues 3-34 (CPFCGGPDTQVKDSRPSEDSSAIRRRRVCPDC) fold into a zinc finger. Residues 12–24 (QVKDSRPSEDSSA) are compositionally biased toward basic and acidic residues. The 91-residue stretch at 49–139 (LVVLKRSGKR…VYKNFREAQD (91 aa)) folds into the ATP-cone domain. Residues 149 to 185 (ERLEGEGDLPEDGEAAPAPPDEVVAAPRRGRPARKRA) are disordered. Positions 176–185 (RRGRPARKRA) are enriched in basic residues.

This sequence belongs to the NrdR family. It depends on Zn(2+) as a cofactor.

Its function is as follows. Negatively regulates transcription of bacterial ribonucleotide reductase nrd genes and operons by binding to NrdR-boxes. The polypeptide is Transcriptional repressor NrdR (Methylorubrum extorquens (strain PA1) (Methylobacterium extorquens)).